Consider the following 393-residue polypeptide: Calreticulin (393 aa).

The N-terminal stretch at 1 to 16 is a signal peptide; sequence MLSILLTLLLSKYALG. N-linked (GlcNAc...) asparagine glycosylation is present at N27. A disulfide bridge connects residues C103 and C135. Y107, K109, Y126, and D133 together coordinate an alpha-D-glucoside. 7 tandem repeats follow at residues 189-200, 208-219, 225-236, 242-253, 257-267, 271-281, and 285-295. A 4 X 12 AA approximate repeats region spans residues 189–253; that stretch reads VEEGSLEDDW…DAKKPDDWDD (65 aa). The tract at residues 194 to 277 is disordered; sequence LEDDWDMLPP…EYKGEWTPRR (84 aa). Over residues 202–216 the composition is skewed to basic and acidic residues; the sequence is PPKKIDDPNDKKPDD. Over residues 217–226 the composition is skewed to acidic residues; the sequence is WVDEQFIDDP. Composition is skewed to basic and acidic residues over residues 227–249 and 258–277; these read DDKK…KKPD and EWER…TPRR. Residues 257-295 are 3 X 11 AA approximate repeats; it reads GEWERPQKDNPEYKGEWTPRRIDNPKYKGEWKPVQIDNP. D315 contacts an alpha-D-glucoside. Residues 351–393 form a disordered region; sequence AEVAKEQSSAKDDKEEAEETKERKELPYDAKASDEPSGDHDEL. The Prevents secretion from ER signature appears at 390 to 393; the sequence is HDEL.

Belongs to the calreticulin family.

It localises to the endoplasmic reticulum lumen. Functionally, molecular calcium-binding chaperone promoting folding, oligomeric assembly and quality control in the ER via the calreticulin/calnexin cycle. This lectin may interact transiently with almost all of the monoglucosylated glycoproteins that are synthesized in the ER. This Schistosoma mansoni (Blood fluke) protein is Calreticulin.